The primary structure comprises 99 residues: Transmembrane protein 14A (99 aa).

The next 3 membrane-spanning stretches (helical) occupy residues 1–21 (MDLI…LGYK), 24–44 (GGVP…YGAY), and 79–99 (PAGL…LLLL).

It belongs to the TMEM14 family.

It is found in the mitochondrion membrane. It localises to the endoplasmic reticulum membrane. Functionally, inhibits apoptosis via negative regulation of the mitochondrial outer membrane permeabilization involved in apoptotic signaling pathway. The chain is Transmembrane protein 14A (Tmem14a) from Mus musculus (Mouse).